Consider the following 237-residue polypeptide: Tyrosine-protein kinase YwqD (237 aa).

Tyr-228 carries the post-translational modification Phosphotyrosine; by autocatalysis.

Belongs to the CpsD/CapB family. Autophosphorylated in vitro, which inhibits ATPase activity. Dephosphorylated by YwqE in vitro.

The catalysed reaction is L-tyrosyl-[protein] + ATP = O-phospho-L-tyrosyl-[protein] + ADP + H(+). May be involved in the regulation of capsular polysaccharide biosynthesis. Autophosphorylates in vitro. Phosphorylates and activates in vitro two UDP-glucose dehydrogenases, YwqF and TuaD, as well as the DNA-binding proteins Ssb and SsbB. This is Tyrosine-protein kinase YwqD (ywqD) from Bacillus subtilis (strain 168).